A 372-amino-acid chain; its full sequence is Cytochrome b (372 aa).

4 helical membrane passes run 25 to 45, 69 to 90, 105 to 125, and 170 to 190; these read FGSMLLTCSIIQMTTGFFLAI, WCLQNLHSIGASMFFICIYIHI, WMSGILLLTILMATSFFGYVL, and FFALHFILPFMIMSTSSIHII. Heme b is bound by residues histidine 75 and histidine 89. Histidine 174 and histidine 188 together coordinate heme b. Position 193 (histidine 193) interacts with a ubiquinone. 4 helical membrane-spanning segments follow: residues 218–238, 280–300, 312–332, and 339–358; these read YKDLFMLTLLLFTMMSIMSFS, LGGTLALLLSIMILLLPPFTH, MAQFLFWTMITTFVILTWAAS, and YITISQMASTMYFLFFIINP.

Belongs to the cytochrome b family. The cytochrome bc1 complex contains 3 respiratory subunits (MT-CYB, CYC1 and UQCRFS1), 2 core proteins (UQCRC1 and UQCRC2) and probably 6 low-molecular weight proteins. The cofactor is heme b.

The protein localises to the mitochondrion inner membrane. Component of the ubiquinol-cytochrome c reductase complex (complex III or cytochrome b-c1 complex) that is part of the mitochondrial respiratory chain. The b-c1 complex mediates electron transfer from ubiquinol to cytochrome c. Contributes to the generation of a proton gradient across the mitochondrial membrane that is then used for ATP synthesis. The protein is Cytochrome b (MT-CYB) of Acrochordus granulatus (Rasp-skinned water snake).